The following is a 59-amino-acid chain: Potassium channel toxin alpha-KTx 15.4 (59 aa).

The first 22 residues, methionine 1–cysteine 22, serve as a signal peptide directing secretion. Glutamine 23 is subject to Pyrrolidone carboxylic acid. Disulfide bonds link cysteine 30–cysteine 50, cysteine 35–cysteine 55, and cysteine 39–cysteine 57.

Expressed by the venom gland.

The protein localises to the secreted. Functionally, blocker of A-type voltage-gated potassium channels of cerebellar granular cells. May also inhibit Kv4/KCND when coexpressed with DPP6 or DPP10. The occlusion of the outer entry of the K(+) conducting pore is partially reversible and affects both open and closed channels. It shares the same target in rat brain than BmTX3 (AC Q8I0L5) and AmmTX3 (AC P60208). The chain is Potassium channel toxin alpha-KTx 15.4 from Androctonus australis (Sahara scorpion).